The sequence spans 461 residues: Nuclear distribution protein PAC1 (461 aa).

Positions 9-41 (QAEELHKSIIAYLTANNLLNTANTLRAELNLSE) constitute a LisH domain. WD repeat units follow at residues 114 to 155 (SHRD…RTIK), 157 to 197 (HTRA…KNIR), 201 to 248 (GHDH…CVRT), 251 to 290 (GHTA…PESK), 312 to 355 (QYLS…LMTL), 357 to 396 (GHDN…KCIK), and 401 to 457 (AHER…MKLR).

The protein belongs to the WD repeat LIS1/nudF family. As to quaternary structure, self-associates. Interacts with NDL1 and dynein.

It is found in the cytoplasm. It localises to the cytoskeleton. Its subcellular location is the spindle pole. Positively regulates the activity of the minus-end directed microtubule motor protein dynein. May enhance dynein-mediated microtubule sliding by targeting dynein to the microtubule plus end. Required for nuclear migration during vegetative growth as well as development. Required for retrograde early endosome (EE) transport from the hyphal tip. Required for localization of dynein to the mitotic spindle poles. Recruits additional proteins to the dynein complex at SPBs. The protein is Nuclear distribution protein PAC1 of Arthroderma otae (strain ATCC MYA-4605 / CBS 113480) (Microsporum canis).